The chain runs to 346 residues: N-acetyl-gamma-glutamyl-phosphate reductase (346 aa).

Cys150 is a catalytic residue.

It belongs to the NAGSA dehydrogenase family. Type 1 subfamily.

It localises to the cytoplasm. It catalyses the reaction N-acetyl-L-glutamate 5-semialdehyde + phosphate + NADP(+) = N-acetyl-L-glutamyl 5-phosphate + NADPH + H(+). It participates in amino-acid biosynthesis; L-arginine biosynthesis; N(2)-acetyl-L-ornithine from L-glutamate: step 3/4. Catalyzes the NADPH-dependent reduction of N-acetyl-5-glutamyl phosphate to yield N-acetyl-L-glutamate 5-semialdehyde. This Moorella thermoacetica (strain ATCC 39073 / JCM 9320) protein is N-acetyl-gamma-glutamyl-phosphate reductase.